Reading from the N-terminus, the 1677-residue chain is Vitellogenin (1677 aa).

Residues 1 to 8 form the signal peptide; it reads LTIALVGS. Positions 17–655 constitute a Vitellogenin domain; it reads FSGSKTYQYK…NAASILPSAV (639 aa). Disordered stretches follow at residues 1089 to 1232 and 1252 to 1280; these read TLRG…SEEI and FQNK…SKQD. Over residues 1098-1122 the composition is skewed to low complexity; the sequence is SSSSSSSSSSSSSSSSSSSSSSQQS. Residues 1123 to 1145 are compositionally biased toward basic and acidic residues; sequence RMEKRMEQDKLTENLERDRDHMR. Residues 1169–1196 show a composition bias toward low complexity; the sequence is SSSSSSSSSSSGSNSSSSSSSSSSSSSR. N-linked (GlcNAc...) asparagine glycosylation is found at asparagine 1182, asparagine 1202, asparagine 1217, and asparagine 1218. The span at 1197-1212 shows a compositional bias: basic residues; the sequence is SHNHRNNTRTLSKSKR. 2 stretches are compositionally biased toward low complexity: residues 1215–1229 and 1260–1273; these read NNNN…SSSS and SSSS…SSQS. A VWFD domain is found at 1490–1675; the sequence is SKCVAQENKF…TATEAASFCV (186 aa). Disulfide bonds link cysteine 1492–cysteine 1631 and cysteine 1515–cysteine 1674. Residues 1636-1649 are compositionally biased toward basic and acidic residues; that stretch reads GERRKEFRMPDGRQ. The disordered stretch occupies residues 1636–1659; that stretch reads GERRKEFRMPDGRQARGPSVSPTP.

Phosvitin, an egg yolk storage protein, is one of the most highly phosphorylated (10%) proteins in nature. In terms of tissue distribution, found in liver, testis and undifferentiated gonads of estrogen-treated fish. Not detected in the brain and spleen.

Functionally, precursor of the major egg-yolk proteins that are sources of nutrients during early development of oviparous organisms. This is Vitellogenin from Acipenser transmontanus (White sturgeon).